A 456-amino-acid polypeptide reads, in one-letter code: Bifunctional protein GlmU (456 aa).

The segment at 1–229 (MSTSPLSVVI…LSEVEGVNNR (229 aa)) is pyrophosphorylase. UDP-N-acetyl-alpha-D-glucosamine is bound by residues 11 to 14 (LAAG), lysine 25, glutamine 76, 81 to 82 (GT), 103 to 105 (YGD), glycine 140, glutamate 154, asparagine 169, and asparagine 227. A Mg(2+)-binding site is contributed by aspartate 105. Asparagine 227 contributes to the Mg(2+) binding site. The tract at residues 230–250 (LQLSALERAYQQQQAQRLLLA) is linker. The segment at 251–456 (GVMLTDPARF…SGWERPVKKK (206 aa)) is N-acetyltransferase. UDP-N-acetyl-alpha-D-glucosamine-binding residues include arginine 333 and lysine 351. The Proton acceptor role is filled by histidine 363. The UDP-N-acetyl-alpha-D-glucosamine site is built by tyrosine 366 and asparagine 377. Residues alanine 380, 386–387 (NY), serine 405, alanine 423, and arginine 440 each bind acetyl-CoA.

This sequence in the N-terminal section; belongs to the N-acetylglucosamine-1-phosphate uridyltransferase family. In the C-terminal section; belongs to the transferase hexapeptide repeat family. In terms of assembly, homotrimer. The cofactor is Mg(2+).

The protein localises to the cytoplasm. The enzyme catalyses alpha-D-glucosamine 1-phosphate + acetyl-CoA = N-acetyl-alpha-D-glucosamine 1-phosphate + CoA + H(+). It carries out the reaction N-acetyl-alpha-D-glucosamine 1-phosphate + UTP + H(+) = UDP-N-acetyl-alpha-D-glucosamine + diphosphate. It participates in nucleotide-sugar biosynthesis; UDP-N-acetyl-alpha-D-glucosamine biosynthesis; N-acetyl-alpha-D-glucosamine 1-phosphate from alpha-D-glucosamine 6-phosphate (route II): step 2/2. The protein operates within nucleotide-sugar biosynthesis; UDP-N-acetyl-alpha-D-glucosamine biosynthesis; UDP-N-acetyl-alpha-D-glucosamine from N-acetyl-alpha-D-glucosamine 1-phosphate: step 1/1. It functions in the pathway bacterial outer membrane biogenesis; LPS lipid A biosynthesis. Catalyzes the last two sequential reactions in the de novo biosynthetic pathway for UDP-N-acetylglucosamine (UDP-GlcNAc). The C-terminal domain catalyzes the transfer of acetyl group from acetyl coenzyme A to glucosamine-1-phosphate (GlcN-1-P) to produce N-acetylglucosamine-1-phosphate (GlcNAc-1-P), which is converted into UDP-GlcNAc by the transfer of uridine 5-monophosphate (from uridine 5-triphosphate), a reaction catalyzed by the N-terminal domain. The protein is Bifunctional protein GlmU of Edwardsiella ictaluri (strain 93-146).